A 224-amino-acid chain; its full sequence is UPF0758 protein CJA_3522 (224 aa).

Residues 102–224 (LLSSPHLVRD…LVSLAERGWL (123 aa)) enclose the MPN domain. H173, H175, and D186 together coordinate Zn(2+). Positions 173 to 186 (HNHPSGLAEPSQAD) match the JAMM motif motif.

It belongs to the UPF0758 family.

The polypeptide is UPF0758 protein CJA_3522 (Cellvibrio japonicus (strain Ueda107) (Pseudomonas fluorescens subsp. cellulosa)).